The following is a 104-amino-acid chain: Urease subunit beta (104 aa).

Belongs to the urease beta subunit family. In terms of assembly, heterotrimer of UreA (gamma), UreB (beta) and UreC (alpha) subunits. Three heterotrimers associate to form the active enzyme.

Its subcellular location is the cytoplasm. The enzyme catalyses urea + 2 H2O + H(+) = hydrogencarbonate + 2 NH4(+). It functions in the pathway nitrogen metabolism; urea degradation; CO(2) and NH(3) from urea (urease route): step 1/1. This is Urease subunit beta from Methylocella silvestris (strain DSM 15510 / CIP 108128 / LMG 27833 / NCIMB 13906 / BL2).